Consider the following 343-residue polypeptide: NADH-quinone oxidoreductase subunit H (343 aa).

A run of 8 helical transmembrane segments spans residues 19–39 (VAWT…GVAY), 89–109 (ALFI…WAVI), 124–144 (LLYV…AGWA), 158–178 (AAQI…VLMA), 198–218 (WYLW…VAET), 257–277 (ILVA…PVAF), 279–299 (PDGI…FLWF), and 314–334 (LGWK…GGMM).

This sequence belongs to the complex I subunit 1 family. In terms of assembly, NDH-1 is composed of 14 different subunits. Subunits NuoA, H, J, K, L, M, N constitute the membrane sector of the complex.

The protein localises to the cell inner membrane. The enzyme catalyses a quinone + NADH + 5 H(+)(in) = a quinol + NAD(+) + 4 H(+)(out). NDH-1 shuttles electrons from NADH, via FMN and iron-sulfur (Fe-S) centers, to quinones in the respiratory chain. The immediate electron acceptor for the enzyme in this species is believed to be ubiquinone. Couples the redox reaction to proton translocation (for every two electrons transferred, four hydrogen ions are translocated across the cytoplasmic membrane), and thus conserves the redox energy in a proton gradient. This subunit may bind ubiquinone. The polypeptide is NADH-quinone oxidoreductase subunit H (Thiobacillus denitrificans (strain ATCC 25259 / T1)).